The primary structure comprises 652 residues: Regulator of DNA class I crossover intermediates 1 (652 aa).

The binds DNA containing a D-loop DNA-binding region spans 1–231 (MNWVGGSRSR…TLFERLNSLG (231 aa)). 2 disordered regions span residues 363–434 (NKTS…NIPS) and 469–506 (KISL…EDQI). Positions 377–388 (YQREYNKNERND) are enriched in basic and acidic residues. The segment covering 389 to 401 (LSTSFENDYYPSS) has biased composition (polar residues). Residues 402-417 (SERKEKFENDYQEKTP) show a composition bias toward basic and acidic residues. Over residues 473–498 (DSAQSSRSTSYSPRPTDSCFSSSSDL) the composition is skewed to low complexity.

Interacts with MSH5. Interacts with TEX11.

Its subcellular location is the chromosome. In terms of biological role, involved in recombination, probably acting by stabilizing recombination intermediates during meiotic crossover formation. Required for normal germline development and fertility. Required for meiotic progression, complete chromosomal synapsis and crossover formation. Binds double-stranded DNA. However, also binds branched DNA molecules, such as those containing a D-loop or Holliday junction structure. Probably not required for formation of DNA double-strand breaks (DSBs). Also binds RNA in an RNA structure-independent manner, with a preference for binding 3'-UTR regions of mRNAs; may stabilize bound RNAs. The protein is Regulator of DNA class I crossover intermediates 1 of Homo sapiens (Human).